The sequence spans 249 residues: Cobalt-precorrin-6A reductase (249 aa).

It belongs to the precorrin-6x reductase family.

It carries out the reaction Co-precorrin-6B + NAD(+) = Co-precorrin-6A + NADH + H(+). It participates in cofactor biosynthesis; adenosylcobalamin biosynthesis; cob(II)yrinate a,c-diamide from sirohydrochlorin (anaerobic route): step 7/10. Functionally, catalyzes the reduction of the macrocycle of cobalt-precorrin-6A to cobalt-precorrin-6B. In Methanocaldococcus jannaschii (strain ATCC 43067 / DSM 2661 / JAL-1 / JCM 10045 / NBRC 100440) (Methanococcus jannaschii), this protein is Cobalt-precorrin-6A reductase (cbiJ).